Consider the following 279-residue polypeptide: MSTSVAERLAIKDEVDKKIELRPNWSEDELQIVFKTAYEQVFGRQGLYASQRFATAEALLRNGKISVKQFIELLAKSEFYKECFFYNNSQVRFIELNYKHLLGRAPYDQSEIAFHVDLYAAAGYDAEIESYIYSPEYDNAFGNFVVPYYRGFQSIPGMKTVGFNRIFELYRGRANSDNAQFGGKSARLRSKISMNLANTIVPPTSPIAASTSSARTLVTSPVMGDARMFIVEAIAGTLNTNVAVRRSRQVYTVPYDRLSATYQEIHKRGGKIVKITPAS.

A PBS-linker domain is found at 2–178 (STSVAERLAI…LYRGRANSDN (177 aa)). The region spanning 226-278 (ARMFIVEAIAGTLNTNVAVRRSRQVYTVPYDRLSATYQEIHKRGGKIVKITPA) is the CpcD-like domain.

This sequence belongs to the phycobilisome linker protein family.

Its subcellular location is the cellular thylakoid membrane. Its function is as follows. Rod linker protein, associated with phycoerythrocyanin. Linker polypeptides determine the state of aggregation and the location of the disk-shaped phycobiliprotein units within the phycobilisome and modulate their spectroscopic properties in order to mediate a directed and optimal energy transfer. This chain is Phycobilisome 34.5 kDa linker polypeptide, phycoerythrocyanin-associated, rod (pecC), found in Mastigocladus laminosus (Fischerella sp.).